We begin with the raw amino-acid sequence, 357 residues long: NADH-quinone oxidoreductase subunit H (357 aa).

Transmembrane regions (helical) follow at residues 18–38, 92–112, 127–147, 165–185, 206–226, 268–288, 294–314, and 329–349; these read VAWMVVWSLVKIVVIAVPIIL, VLFVVAPVVTLMPALAAWAVV, LLYIMAITSIGVYGVIVAGWA, VSYELAIGFVLVSVLLVSGSL, FLSWNWLPLLPLFIIYVISAV, ILLSCMAAIMFLGGWMSPIDI, IPGWIWLGIKTFCVVSMFVWF, and LGWKIFIPLTGVWLVVLAIWM.

It belongs to the complex I subunit 1 family. In terms of assembly, NDH-1 is composed of 14 different subunits. Subunits NuoA, H, J, K, L, M, N constitute the membrane sector of the complex.

The protein localises to the cell inner membrane. The enzyme catalyses a quinone + NADH + 5 H(+)(in) = a quinol + NAD(+) + 4 H(+)(out). Functionally, NDH-1 shuttles electrons from NADH, via FMN and iron-sulfur (Fe-S) centers, to quinones in the respiratory chain. The immediate electron acceptor for the enzyme in this species is believed to be ubiquinone. Couples the redox reaction to proton translocation (for every two electrons transferred, four hydrogen ions are translocated across the cytoplasmic membrane), and thus conserves the redox energy in a proton gradient. This subunit may bind ubiquinone. The chain is NADH-quinone oxidoreductase subunit H from Bordetella bronchiseptica (strain ATCC BAA-588 / NCTC 13252 / RB50) (Alcaligenes bronchisepticus).